Here is a 781-residue protein sequence, read N- to C-terminus: MTPYRPEFSAAEQSRIDAEFSRLARNKTVYLDHAGTTLYAENQVTAAAEQLQRNVICNPHTCRLTGDFVDQVRFKILEFFNTTAEDYHVIFTANATAALSLVAENFDFGSSGDFHFCQENHTSVLGMRERVRANGIYMLREKEISGGGAKENGTVHQVSGKTGNSLVTFSAQCNFSGYKIPLDSIEKIQNYGLSKPGKQLWSALGDKKEHTHNDYYICLDAASFVATSPLDLRKYRPDYVCLSFYKIFGYPTGVGALLVSRRGAEVFQKRRFFGGGTINYAFPHAMDYQLRETFHQRYEDGTLPFLSIVGLLEGFRTLERLVPKTDEFSTMERISRHVFGLAKYVEDQLRQLQHPNGEPLVELYNKVGYQDKARQGGIVAFNVRTESGSFVGFGEIACVAALHGILLRTGCFCNIGACQYYLGLDEDALDSIYKRAGRICGDYFDLVDGQPTGAVRVSFGYMTTIQDVEQLLQMLRSSYLATKPLQRIQFIEEQAEQLPPLLKERVQLLRPKLLQMAIYPVKSCAAFKIESPGSWPLTDQGLKYDREWMIVDMNGMALTQKRCTELCLIRPVIKVDQLELQFGDNSHFSVPLSLEDQAADSAKCVSKVCRQPVEGLDCGDAVAQWLSENLGLEGLRLLRQSGQRNSSKDQQKLSLVNQAQFLLLNRSSVRSLQFEEPLDETVDRFRANIIIDTGSAFEELTYKALSIGGIQFQVEGPCQRCDMICINQRTGERSPETLTTISRLQKGRMRFGIYITRIPPDTKDLEPKEQHMTCGDVVIVE.

The residue at position 246 (lysine 246) is an N6-(pyridoxal phosphate)lysine. The active site involves cysteine 413. In terms of domain architecture, MOSC spans 619 to 781 (GDAVAQWLSE…MTCGDVVIVE (163 aa)). Serine 734 carries the phosphoserine modification.

The protein belongs to the class-V pyridoxal-phosphate-dependent aminotransferase family. MOCOS subfamily. Pyridoxal 5'-phosphate serves as cofactor.

The catalysed reaction is Mo-molybdopterin + L-cysteine + AH2 = thio-Mo-molybdopterin + L-alanine + A + H2O. The protein operates within cofactor biosynthesis; molybdopterin biosynthesis. In terms of biological role, sulfurates the molybdenum cofactor. Sulfation of molybdenum is essential for xanthine dehydrogenase (XDH) and aldehyde oxidase (ADO) enzymes in which molybdenum cofactor is liganded by 1 oxygen and 1 sulfur atom in active form. The polypeptide is Molybdenum cofactor sulfurase (Drosophila erecta (Fruit fly)).